The sequence spans 110 residues: UPF0122 protein BPUM_1495 (110 aa).

The protein belongs to the UPF0122 family.

In terms of biological role, might take part in the signal recognition particle (SRP) pathway. This is inferred from the conservation of its genetic proximity to ftsY/ffh. May be a regulatory protein. The protein is UPF0122 protein BPUM_1495 of Bacillus pumilus (strain SAFR-032).